A 316-amino-acid polypeptide reads, in one-letter code: Taste receptor type 2 member 3 (316 aa).

At 1 to 7 (MFGFIEG) the chain is on the extracellular side. A helical transmembrane segment spans residues 8-28 (VFLVLTITEFILGNLVNGFIV). Topologically, residues 29–50 (SINSSYWFKSKKISLSNFIITS) are cytoplasmic. The helical transmembrane segment at 51–71 (LALFRIFLLWIIFIDSLIIVF) threads the bilayer. The Extracellular segment spans residues 72–86 (SYQTHDSGIMMQLID). The helical transmembrane segment at 87–107 (VFWTFTNHFSIWLISCLSVFY) threads the bilayer. The Cytoplasmic portion of the chain corresponds to 108–128 (CLKIASFSHPSFLWLKWRASR). Residues 129–149 (VVVGMLWGALLLSCVSTMSLM) form a helical membrane-spanning segment. Residues 150–186 (NEFKIYSALTRSKDTPNMTEYIRLKRQEYNLMHVLGN) are Extracellular-facing. The N-linked (GlcNAc...) asparagine glycan is linked to Asn166. Residues 187–207 (LWKIPSLIVSLVAYLLLLLSL) traverse the membrane as a helical segment. Residues 208–234 (GKHTQQMQQYSIDSRDQSAEAHKRAMR) lie on the Cytoplasmic side of the membrane. Residues 235 to 255 (IISSFLLFFLFYFLSFMILSS) traverse the membrane as a helical segment. Over 256–266 (SRFLPETRIAR) the chain is Extracellular. A helical transmembrane segment spans residues 267–287 (IIGVVISMSYLVGDSFILIVC). Residues 288 to 316 (NNKLKHTFVAMLPCECGHLKPGSKGPSAS) lie on the Cytoplasmic side of the membrane.

The protein belongs to the G-protein coupled receptor T2R family.

Its subcellular location is the membrane. In terms of biological role, gustducin-coupled receptor implicated in the perception of bitter compounds in the oral cavity and the gastrointestinal tract. Signals through PLCB2 and the calcium-regulated cation channel TRPM5. The polypeptide is Taste receptor type 2 member 3 (Tas2r3) (Mus musculus (Mouse)).